The chain runs to 513 residues: ATP synthase subunit alpha (513 aa).

169–176 (GDRQCGKT) lines the ATP pocket.

The protein belongs to the ATPase alpha/beta chains family. In terms of assembly, F-type ATPases have 2 components, CF(1) - the catalytic core - and CF(0) - the membrane proton channel. CF(1) has five subunits: alpha(3), beta(3), gamma(1), delta(1), epsilon(1). CF(0) has three main subunits: a(1), b(2) and c(9-12). The alpha and beta chains form an alternating ring which encloses part of the gamma chain. CF(1) is attached to CF(0) by a central stalk formed by the gamma and epsilon chains, while a peripheral stalk is formed by the delta and b chains.

It is found in the cell inner membrane. The catalysed reaction is ATP + H2O + 4 H(+)(in) = ADP + phosphate + 5 H(+)(out). Its function is as follows. Produces ATP from ADP in the presence of a proton gradient across the membrane. The alpha chain is a regulatory subunit. The polypeptide is ATP synthase subunit alpha (Burkholderia ambifaria (strain MC40-6)).